The following is a 124-amino-acid chain: S-adenosylmethionine decarboxylase proenzyme (124 aa).

Serine 63 serves as the catalytic Schiff-base intermediate with substrate; via pyruvic acid. Serine 63 bears the Pyruvic acid (Ser); by autocatalysis mark. Residue histidine 68 is the Proton acceptor; for processing activity of the active site. The active-site Proton donor; for catalytic activity is cysteine 83.

This sequence belongs to the prokaryotic AdoMetDC family. Type 1 subfamily. Heterotetramer of two alpha and two beta chains arranged as a dimer of alpha/beta heterodimers. Pyruvate serves as cofactor. In terms of processing, is synthesized initially as an inactive proenzyme. Formation of the active enzyme involves a self-maturation process in which the active site pyruvoyl group is generated from an internal serine residue via an autocatalytic post-translational modification. Two non-identical subunits are generated from the proenzyme in this reaction, and the pyruvate is formed at the N-terminus of the alpha chain, which is derived from the carboxyl end of the proenzyme. The post-translation cleavage follows an unusual pathway, termed non-hydrolytic serinolysis, in which the side chain hydroxyl group of the serine supplies its oxygen atom to form the C-terminus of the beta chain, while the remainder of the serine residue undergoes an oxidative deamination to produce ammonia and the pyruvoyl group blocking the N-terminus of the alpha chain.

It catalyses the reaction S-adenosyl-L-methionine + H(+) = S-adenosyl 3-(methylsulfanyl)propylamine + CO2. It participates in amine and polyamine biosynthesis; S-adenosylmethioninamine biosynthesis; S-adenosylmethioninamine from S-adenosyl-L-methionine: step 1/1. Its function is as follows. Catalyzes the decarboxylation of S-adenosylmethionine to S-adenosylmethioninamine (dcAdoMet), the propylamine donor required for the synthesis of the polyamines spermine and spermidine from the diamine putrescine. The sequence is that of S-adenosylmethionine decarboxylase proenzyme from Caldanaerobacter subterraneus subsp. tengcongensis (strain DSM 15242 / JCM 11007 / NBRC 100824 / MB4) (Thermoanaerobacter tengcongensis).